Here is a 195-residue protein sequence, read N- to C-terminus: Small ribosomal subunit protein uS4 (195 aa).

The region spanning 109 to 183 is the S4 RNA-binding domain; it reads RRLQTQVFKL…VKRKNLKKNQ (75 aa). The tract at residues 165–195 is disordered; it reads PFGGGRPGRVKRKNLKKNQGGGGGAAEEEED.

This sequence belongs to the universal ribosomal protein uS4 family. Component of the small ribosomal subunit. Identified in a IGF2BP1-dependent mRNP granule complex containing untranslated mRNAs. Part of the small subunit (SSU) processome, composed of more than 70 proteins and the RNA chaperone small nucleolar RNA (snoRNA) U3.

The protein localises to the cytoplasm. Its subcellular location is the nucleus. It is found in the nucleolus. Its function is as follows. Component of the small ribosomal subunit. The ribosome is a large ribonucleoprotein complex responsible for the synthesis of proteins in the cell. Part of the small subunit (SSU) processome, first precursor of the small eukaryotic ribosomal subunit. During the assembly of the SSU processome in the nucleolus, many ribosome biogenesis factors, an RNA chaperone and ribosomal proteins associate with the nascent pre-rRNA and work in concert to generate RNA folding, modifications, rearrangements and cleavage as well as targeted degradation of pre-ribosomal RNA by the RNA exosome. The chain is Small ribosomal subunit protein uS4 from Drosophila melanogaster (Fruit fly).